The sequence spans 376 residues: UDP-N-acetylglucosamine 2-epimerase (376 aa).

Substrate is bound by residues R10, K15, D95, E117, H213, Q271, F276, 290 to 292 (SGG), E296, and R313.

It belongs to the UDP-N-acetylglucosamine 2-epimerase family. In terms of assembly, homodimer.

The protein localises to the cytoplasm. It carries out the reaction UDP-N-acetyl-alpha-D-glucosamine = UDP-N-acetyl-alpha-D-mannosamine. It participates in bacterial outer membrane biogenesis; enterobacterial common antigen biosynthesis. Allosterically activated by its substrate, UDP-GlcNAc. In terms of biological role, catalyzes the reversible epimerization at C-2 of UDP-N-acetylglucosamine (UDP-GlcNAc) and thereby provides bacteria with UDP-N-acetylmannosamine (UDP-ManNAc), the activated donor of ManNAc residues. Also involved in bacteriophage N4 adsorption. This Escherichia coli (strain K12) protein is UDP-N-acetylglucosamine 2-epimerase.